A 120-amino-acid polypeptide reads, in one-letter code: Large ribosomal subunit protein bL19 (120 aa).

This sequence belongs to the bacterial ribosomal protein bL19 family.

This protein is located at the 30S-50S ribosomal subunit interface and may play a role in the structure and function of the aminoacyl-tRNA binding site. The sequence is that of Large ribosomal subunit protein bL19 from Cyanothece sp. (strain PCC 7425 / ATCC 29141).